A 367-amino-acid chain; its full sequence is UDP-N-acetylglucosamine--N-acetylmuramyl-(pentapeptide) pyrophosphoryl-undecaprenol N-acetylglucosamine transferase (367 aa).

UDP-N-acetyl-alpha-D-glucosamine-binding positions include 15 to 17 (TGG), Asn-127, Arg-163, Ser-191, Ile-249, and Gln-294.

This sequence belongs to the glycosyltransferase 28 family. MurG subfamily.

The protein localises to the cell inner membrane. The enzyme catalyses di-trans,octa-cis-undecaprenyl diphospho-N-acetyl-alpha-D-muramoyl-L-alanyl-D-glutamyl-meso-2,6-diaminopimeloyl-D-alanyl-D-alanine + UDP-N-acetyl-alpha-D-glucosamine = di-trans,octa-cis-undecaprenyl diphospho-[N-acetyl-alpha-D-glucosaminyl-(1-&gt;4)]-N-acetyl-alpha-D-muramoyl-L-alanyl-D-glutamyl-meso-2,6-diaminopimeloyl-D-alanyl-D-alanine + UDP + H(+). Its pathway is cell wall biogenesis; peptidoglycan biosynthesis. In terms of biological role, cell wall formation. Catalyzes the transfer of a GlcNAc subunit on undecaprenyl-pyrophosphoryl-MurNAc-pentapeptide (lipid intermediate I) to form undecaprenyl-pyrophosphoryl-MurNAc-(pentapeptide)GlcNAc (lipid intermediate II). The protein is UDP-N-acetylglucosamine--N-acetylmuramyl-(pentapeptide) pyrophosphoryl-undecaprenol N-acetylglucosamine transferase of Burkholderia lata (strain ATCC 17760 / DSM 23089 / LMG 22485 / NCIMB 9086 / R18194 / 383).